A 199-amino-acid chain; its full sequence is Probable nicotinate-nucleotide adenylyltransferase (199 aa).

It belongs to the NadD family.

It carries out the reaction nicotinate beta-D-ribonucleotide + ATP + H(+) = deamido-NAD(+) + diphosphate. It functions in the pathway cofactor biosynthesis; NAD(+) biosynthesis; deamido-NAD(+) from nicotinate D-ribonucleotide: step 1/1. In terms of biological role, catalyzes the reversible adenylation of nicotinate mononucleotide (NaMN) to nicotinic acid adenine dinucleotide (NaAD). This Chloroherpeton thalassium (strain ATCC 35110 / GB-78) protein is Probable nicotinate-nucleotide adenylyltransferase.